Here is a 349-residue protein sequence, read N- to C-terminus: Thioredoxin-related transmembrane protein 4 (349 aa).

The N-terminal stretch at M1–A23 is a signal peptide. The region spanning A30 to E137 is the Thioredoxin domain. Catalysis depends on nucleophile residues C64 and C67. C64 and C67 are disulfide-bonded. The chain crosses the membrane as a helical span at residues V190–I210. Basic and acidic residues predominate over residues R225–Q240. Residues R225–L349 are disordered. Acidic residues-rich tracts occupy residues Q242–N284 and V312–I321. Phosphoserine occurs at positions 251 and 259. Positions D335–L349 are enriched in basic and acidic residues.

The protein resides in the nucleus inner membrane. It localises to the endoplasmic reticulum membrane. In Homo sapiens (Human), this protein is Thioredoxin-related transmembrane protein 4 (TMX4).